The primary structure comprises 605 residues: Exo-beta-1,3-glucanase (605 aa).

The disordered stretch occupies residues 1–23 (MHVPPTDPARSAPPASPHRRRRP). The signal sequence occupies residues 1–44 (MHVPPTDPARSAPPASPHRRRRPKALGLTALAAAMLMAVPTTQA). Residues Gln174, 194-196 (YGW), Gln217, 446-449 (WRAD), and 480-481 (EH) each bind substrate. The Proton donor role is filled by Glu502. Tyr505 is a binding site for substrate.

The protein belongs to the glycosyl hydrolase 55 family.

The protein localises to the secreted. It carries out the reaction Successive hydrolysis of beta-D-glucose units from the non-reducing ends of (1-&gt;3)-beta-D-glucans, releasing alpha-glucose.. Its function is as follows. Exo-beta-1,3-glucanase that specifically hydrolyzes laminarin and laminarioligosaccharides, producing glucose and laminaribiose as end products. The protein is Exo-beta-1,3-glucanase of Streptomyces sp. (strain SirexAA-E / ActE).